The following is a 135-amino-acid chain: Small ribosomal subunit protein uS9 (135 aa).

Over residues 108–118 (VGDSRRTEPHK) the composition is skewed to basic and acidic residues. The disordered stretch occupies residues 108–135 (VGDSRRTEPHKPNRSTKGPRAKRQKSYR). Over residues 119-135 (PNRSTKGPRAKRQKSYR) the composition is skewed to basic residues.

Belongs to the universal ribosomal protein uS9 family. Part of the 30S ribosomal subunit.

This Thermococcus kodakarensis (strain ATCC BAA-918 / JCM 12380 / KOD1) (Pyrococcus kodakaraensis (strain KOD1)) protein is Small ribosomal subunit protein uS9.